Consider the following 65-residue polypeptide: Small ribosomal subunit protein bS21 (65 aa).

The span at 43–52 (EKKRVKEALA) shows a compositional bias: basic and acidic residues. Positions 43-65 (EKKRVKEALARKRSRKKARKEQD) are disordered. The segment covering 53–65 (RKRSRKKARKEQD) has biased composition (basic residues).

The protein belongs to the bacterial ribosomal protein bS21 family.

The polypeptide is Small ribosomal subunit protein bS21 (Koribacter versatilis (strain Ellin345)).